Reading from the N-terminus, the 124-residue chain is Small ribosomal subunit protein uS13 (124 aa).

The disordered stretch occupies residues 89-124 (GRRHRQGLPVRGQRTKTNARTRKGPKRTVAGKKKAK). Over residues 101–124 (QRTKTNARTRKGPKRTVAGKKKAK) the composition is skewed to basic residues.

This sequence belongs to the universal ribosomal protein uS13 family. Part of the 30S ribosomal subunit. Forms a loose heterodimer with protein S19. Forms two bridges to the 50S subunit in the 70S ribosome.

Located at the top of the head of the 30S subunit, it contacts several helices of the 16S rRNA. In the 70S ribosome it contacts the 23S rRNA (bridge B1a) and protein L5 of the 50S subunit (bridge B1b), connecting the 2 subunits; these bridges are implicated in subunit movement. Contacts the tRNAs in the A and P-sites. The protein is Small ribosomal subunit protein uS13 of Nocardioides sp. (strain ATCC BAA-499 / JS614).